The following is a 250-amino-acid chain: Beta-crystallin B1 (250 aa).

A compositionally biased stretch (polar residues) spans 1 to 13 (MSQAAKASATTAV). The tract at residues 1–49 (MSQAAKASATTAVNPGPDGKGKGAPSTGPAPAPGPTPVPASVPRPAAKV) is disordered. S2 is modified (N-acetylserine). Positions 2–56 (SQAAKASATTAVNPGPDGKGKGAPSTGPAPAPGPTPVPASVPRPAAKVGDLPPGS) are N-terminal arm. Positions 28 to 42 (GPAPAPGPTPVPASV) are enriched in pro residues. Beta/gamma crystallin 'Greek key' domains follow at residues 57–96 (YRLIVFEQENFQGRRVEFSGECLNLGDRGFDRVRSLIVVS) and 97–141 (GPWV…RPIR). The connecting peptide stretch occupies residues 142–146 (MDSQE). Beta/gamma crystallin 'Greek key' domains follow at residues 147 to 188 (HKIC…TVSG) and 189 to 231 (GTWV…RRLR). The segment at 233–250 (RQWHQEGCFPVLTAEPPK) is C-terminal arm.

This sequence belongs to the beta/gamma-crystallin family. In terms of assembly, homo/heterodimer, or complexes of higher-order. The structure of beta-crystallin oligomers seems to be stabilized through interactions between the N-terminal arms. In terms of processing, specific cleavages in the N-terminal arm occur during lens maturation and give rise to truncated forms, leading to impaired oligomerization and protein insolubilization. The protease responsible for this partial degradation could be calpain II.

Functionally, crystallins are the dominant structural components of the vertebrate eye lens. This chain is Beta-crystallin B1 (Crybb1), found in Mus musculus (Mouse).